A 205-amino-acid polypeptide reads, in one-letter code: Adenylyl-sulfate kinase (205 aa).

Position 31 to 38 (31 to 38 (GLSGSGKS)) interacts with ATP. Ser105 (phosphoserine intermediate) is an active-site residue.

The protein belongs to the APS kinase family.

The enzyme catalyses adenosine 5'-phosphosulfate + ATP = 3'-phosphoadenylyl sulfate + ADP + H(+). Its pathway is sulfur metabolism; hydrogen sulfide biosynthesis; sulfite from sulfate: step 2/3. Its function is as follows. Catalyzes the synthesis of activated sulfate. The sequence is that of Adenylyl-sulfate kinase from Shewanella pealeana (strain ATCC 700345 / ANG-SQ1).